A 524-amino-acid chain; its full sequence is Probable serine/threonine-protein kinase WNK10 (524 aa).

The 258-residue stretch at 16–273 (IRYNDVLGRG…ALELLKDQLL (258 aa)) folds into the Protein kinase domain. ATP contacts are provided by residues 96-99 (TELF) and Lys146. Asp163 serves as the catalytic Proton acceptor. A Phosphoserine modification is found at Ser477. Positions 480-523 (SNKQSEDLKTELNVIESQYNQSCQRLLRMKEEAIEKAKRKWMKL) form a coiled coil.

It belongs to the protein kinase superfamily. Ser/Thr protein kinase family. WNK subfamily.

The catalysed reaction is L-seryl-[protein] + ATP = O-phospho-L-seryl-[protein] + ADP + H(+). The enzyme catalyses L-threonyl-[protein] + ATP = O-phospho-L-threonyl-[protein] + ADP + H(+). Its function is as follows. May regulate flowering time by modulating the photoperiod pathway. This chain is Probable serine/threonine-protein kinase WNK10 (WNK10), found in Arabidopsis thaliana (Mouse-ear cress).